Consider the following 477-residue polypeptide: Calcium uptake protein 1, mitochondrial (477 aa).

The transit peptide at Met-1–Leu-33 directs the protein to the mitochondrion. Residues Ala-57 to Gly-107 form a disordered region. The span at Lys-66–Ala-89 shows a compositional bias: basic and acidic residues. Residues Lys-101–Lys-112 form a polybasic region region. Residue Ser-124 is modified to Phosphoserine; by PKB. The segment at Lys-128–Arg-131 is k/R-ring. The EF-hand 1 domain maps to Thr-220–Gln-255. Ca(2+)-binding residues include Asp-233, Asn-235, Asp-237, Glu-239, and Glu-244. Residues Arg-261–Arg-265 are k/R-ring. Residues Lys-356–Ile-376 form the EF-hand 2; degenerate domain. In terms of domain architecture, EF-hand 3 spans Leu-410 to Arg-445. Ca(2+) is bound by residues Asp-423, Asp-425, Asn-427, Glu-429, and Glu-434. Arg-457 is modified (asymmetric dimethylarginine). Residues Arg-457–Gln-467 form a C-helix region region.

It belongs to the MICU1 family. MICU1 subfamily. In terms of assembly, heterodimer; disulfide-linked; heterodimerizes with MICU2 or MICU3. Homodimer; disulfide-linked. Component of the uniplex complex, composed of MCU, EMRE/SMDT1, MICU1 and MICU2 (or MICU3) in a 4:4:1:1 stoichiometry. The composition of calcium sensors within the uniplex complex can differ depending on tissues: a MICU1 homodimer can be present instead of the MICU1-MICU2 heterodimer in skeletal-muscle and kidney. MICU1 is recruited to the uniplex complex by EMRE/SMDT1, and it associates with MCU at low calcium levels, occluding the pore of the MCU channel. Associates with the MICOS complex. Interacts with SLC25A23. Interacts with CHCHD4/MIA40; which introduces the interchain disulfide bond with MICU2. Interacts (when methylated) with UCP2; leading to decrease the calcium sensitivity of MICU1. Heterodimer; disulfide-linked; heterodimerizes with MICU2 or MICU3. Heterodimerizes with MICU3 in skeletal muscle. Component of the uniplex complex, composed of MCU, EMRE/SMDT1, MICU1 and MICU2 (or MICU3) in a 4:4:1:1 stoichiometry. Also localizes to mitochondrial cristae junctions. In terms of processing, phosphorylation at Ser-124 by AKT1 impairs its maturation and stability. Asymmetric dimethylation at Arg-457 by PRMT1 decreases the calcium sensitivity of MICU1 by promoting interaction with UCP2. Post-translationally, degraded by YME1L1 when not complexed as homodimer or heterodimer. Not degraded when complexed as homodimer or heterodimer; the presence of the interchain disulfide bond protecting MICU1 from degradation by YME1L1. In terms of tissue distribution, expressed in skeletal muscle, heart, kidney, liver, brain, lung, fat and spleen. Specifically expressed in the skeletal muscle.

It is found in the mitochondrion intermembrane space. The protein resides in the mitochondrion inner membrane. Its function is as follows. Calcium sensor of the mitochondrial calcium uniporter (MCU) channel, which senses calcium level via its EF-hand domains. MICU1 and MICU2 (or MICU3) form a disulfide-linked heterodimer that stimulates and inhibits MCU activity, depending on the concentration of calcium. At low calcium levels, MICU1 occludes the pore of the MCU channel, preventing mitochondrial calcium uptake. At higher calcium levels, calcium-binding to MICU1 and MICU2 (or MICU3) induces a conformational change that weakens MCU-MICU1 interactions and moves the MICU1-MICU2 heterodimer away from the pore, allowing calcium permeation through the MCU channel. Also required to protect against manganese toxicity by preventing manganese uptake by MCU: mechanistically, manganese-binding to its EF-hand domains does not induce any conformational change, maintaining MCU pore occlusion. Acts as a regulator of mitochondrial cristae structure independently of its ability to regulate the mitochondrial calcium uniporter channel. Regulates glucose-dependent insulin secretion in pancreatic beta-cells by regulating mitochondrial calcium uptake. Induces T-helper 1-mediated autoreactivity, which is accompanied by the release of IFNG. In terms of biological role, isoform that regulates mitochondrial calcium uniporter (MCU) in the skeletal muscle. Compared to other isoforms, this isoform has higher affinity for calcium, promoting mitochondrial calcium uptake at lower calcium concentrations. This allows a rapid response of mitochondrial metabolism and ensures sustained ATP production needed for resistance and strenuous exercise. The sequence is that of Calcium uptake protein 1, mitochondrial from Mus musculus (Mouse).